The chain runs to 367 residues: tRNA/tmRNA (uracil-C(5))-methyltransferase (367 aa).

S-adenosyl-L-methionine-binding residues include Gln-190, Tyr-218, Asn-223, Glu-239, and Asp-299. Catalysis depends on Cys-324, which acts as the Nucleophile. Glu-358 (proton acceptor) is an active-site residue.

It belongs to the class I-like SAM-binding methyltransferase superfamily. RNA M5U methyltransferase family. TrmA subfamily.

The catalysed reaction is uridine(54) in tRNA + S-adenosyl-L-methionine = 5-methyluridine(54) in tRNA + S-adenosyl-L-homocysteine + H(+). It catalyses the reaction uridine(341) in tmRNA + S-adenosyl-L-methionine = 5-methyluridine(341) in tmRNA + S-adenosyl-L-homocysteine + H(+). Dual-specificity methyltransferase that catalyzes the formation of 5-methyluridine at position 54 (m5U54) in all tRNAs, and that of position 341 (m5U341) in tmRNA (transfer-mRNA). The polypeptide is tRNA/tmRNA (uracil-C(5))-methyltransferase (Musicola paradisiaca (strain Ech703) (Dickeya paradisiaca)).